Reading from the N-terminus, the 205-residue chain is dITP/XTP pyrophosphatase (205 aa).

A substrate-binding site is contributed by 11 to 16; it reads TKNMGK. Residues Glu44 and Asp73 each coordinate Mg(2+). Asp73 functions as the Proton acceptor in the catalytic mechanism. Residues Ser74, 158–161, Lys181, and 186–187 each bind substrate; these read FGYD and HR.

This sequence belongs to the HAM1 NTPase family. As to quaternary structure, homodimer. The cofactor is Mg(2+).

It carries out the reaction XTP + H2O = XMP + diphosphate + H(+). The catalysed reaction is dITP + H2O = dIMP + diphosphate + H(+). It catalyses the reaction ITP + H2O = IMP + diphosphate + H(+). Functionally, pyrophosphatase that catalyzes the hydrolysis of nucleoside triphosphates to their monophosphate derivatives, with a high preference for the non-canonical purine nucleotides XTP (xanthosine triphosphate), dITP (deoxyinosine triphosphate) and ITP. Seems to function as a house-cleaning enzyme that removes non-canonical purine nucleotides from the nucleotide pool, thus preventing their incorporation into DNA/RNA and avoiding chromosomal lesions. This chain is dITP/XTP pyrophosphatase, found in Bacillus thuringiensis subsp. konkukian (strain 97-27).